We begin with the raw amino-acid sequence, 553 residues long: Putative transport protein YidE (553 aa).

The next 5 helical transmembrane spans lie at 4–24, 28–48, 65–85, 95–115, and 158–178; these read IALT…IGNI, GVGF…HFVD, FGLI…FFAS, LFAV…HKIF, and MSYA…MWLM. RCK C-terminal domains are found at residues 192–276 and 279–361; these read KHES…VIGK and DTSL…VVGN. The next 6 membrane-spanning stretches (helical) occupy residues 371-391, 393-413, 437-457, 464-484, 493-513, and 533-553; these read MLPV…PLFV, GFPV…ALIL, LGIV…FVDT, LSWI…VGLL, YLTL…LAFA, and LVMF…WGMG.

The protein belongs to the AAE transporter (TC 2.A.81) family. YidE subfamily.

It localises to the cell membrane. This is Putative transport protein YidE from Salmonella heidelberg (strain SL476).